A 197-amino-acid chain; its full sequence is Dephospho-CoA kinase (197 aa).

Positions 2 to 197 constitute a DPCK domain; sequence RIGLTGGIAS…YDALAKTAHE (196 aa). 10 to 15 provides a ligand contact to ATP; that stretch reads ASGKSL.

This sequence belongs to the CoaE family.

Its subcellular location is the cytoplasm. It carries out the reaction 3'-dephospho-CoA + ATP = ADP + CoA + H(+). It functions in the pathway cofactor biosynthesis; coenzyme A biosynthesis; CoA from (R)-pantothenate: step 5/5. Functionally, catalyzes the phosphorylation of the 3'-hydroxyl group of dephosphocoenzyme A to form coenzyme A. This is Dephospho-CoA kinase from Shouchella clausii (strain KSM-K16) (Alkalihalobacillus clausii).